The primary structure comprises 159 residues: Phosphopantetheine adenylyltransferase (159 aa).

A substrate-binding site is contributed by serine 9. ATP-binding positions include 9 to 10 (SF) and histidine 17. Positions 41, 73, and 87 each coordinate substrate. Residues 88 to 90 (GLR), glutamate 98, and 123 to 129 (YGYLSSS) each bind ATP.

Belongs to the bacterial CoaD family. As to quaternary structure, homohexamer. Mg(2+) is required as a cofactor.

Its subcellular location is the cytoplasm. It catalyses the reaction (R)-4'-phosphopantetheine + ATP + H(+) = 3'-dephospho-CoA + diphosphate. Its pathway is cofactor biosynthesis; coenzyme A biosynthesis; CoA from (R)-pantothenate: step 4/5. Reversibly transfers an adenylyl group from ATP to 4'-phosphopantetheine, yielding dephospho-CoA (dPCoA) and pyrophosphate. This is Phosphopantetheine adenylyltransferase from Thermoanaerobacter pseudethanolicus (strain ATCC 33223 / 39E) (Clostridium thermohydrosulfuricum).